The sequence spans 249 residues: Structural protein VP10 (249 aa).

Its subcellular location is the virion. Forms the virion spike 'foot' and helps anchor the VP9 spike 'head' protein in the virion. The chain is Structural protein VP10 (Segment-10) from Banna virus (BAV).